The following is a 175-amino-acid chain: uncharacterized protein (175 aa).

This is an uncharacterized protein from Human cytomegalovirus (strain AD169) (HHV-5).